A 37-amino-acid chain; its full sequence is Cytochrome b6-f complex subunit 5 (37 aa).

Residues 5-25 (LLSGIVLGLIPITLAGLFVTA) traverse the membrane as a helical segment.

This sequence belongs to the PetG family. As to quaternary structure, the 4 large subunits of the cytochrome b6-f complex are cytochrome b6, subunit IV (17 kDa polypeptide, PetD), cytochrome f and the Rieske protein, while the 4 small subunits are PetG, PetL, PetM and PetN. The complex functions as a dimer.

Its subcellular location is the plastid. The protein localises to the chloroplast thylakoid membrane. In terms of biological role, component of the cytochrome b6-f complex, which mediates electron transfer between photosystem II (PSII) and photosystem I (PSI), cyclic electron flow around PSI, and state transitions. PetG is required for either the stability or assembly of the cytochrome b6-f complex. This is Cytochrome b6-f complex subunit 5 from Chara vulgaris (Common stonewort).